The primary structure comprises 300 residues: Non-secreted LysM effector LysM16 (300 aa).

In terms of domain architecture, LysM spans 176 to 222 (EWHTVFSGDTCQLIEAEYGITLEKFIALNTYVNSTCGNIWPDYAYCV).

This sequence belongs to the secreted LysM effector family.

In terms of biological role, non-secreted LysM effector that might be involved in manipulation of host defenses for successful infection. The chain is Non-secreted LysM effector LysM16 from Penicillium expansum (Blue mold rot fungus).